We begin with the raw amino-acid sequence, 309 residues long: Voltage-dependent anion channel-forming protein mll4386 (309 aa).

3 helical membrane passes run 32 to 52 (ILPQ…LARW), 58 to 78 (GVFN…YLSF), and 227 to 247 (IVCL…TPLF).

Belongs to the anion channel-forming bestrophin (TC 1.A.46) family.

It localises to the cell membrane. This is Voltage-dependent anion channel-forming protein mll4386 from Mesorhizobium japonicum (strain LMG 29417 / CECT 9101 / MAFF 303099) (Mesorhizobium loti (strain MAFF 303099)).